The following is a 233-amino-acid chain: Protein-L-isoaspartate O-methyltransferase (233 aa).

Serine 83 is an active-site residue.

Belongs to the methyltransferase superfamily. L-isoaspartyl/D-aspartyl protein methyltransferase family.

It is found in the cytoplasm. The enzyme catalyses [protein]-L-isoaspartate + S-adenosyl-L-methionine = [protein]-L-isoaspartate alpha-methyl ester + S-adenosyl-L-homocysteine. Catalyzes the methyl esterification of L-isoaspartyl residues in peptides and proteins that result from spontaneous decomposition of normal L-aspartyl and L-asparaginyl residues. It plays a role in the repair and/or degradation of damaged proteins. In Opitutus terrae (strain DSM 11246 / JCM 15787 / PB90-1), this protein is Protein-L-isoaspartate O-methyltransferase.